Reading from the N-terminus, the 270-residue chain is Tryptophan synthase alpha chain (270 aa).

Catalysis depends on proton acceptor residues Glu-57 and Asp-68.

Belongs to the TrpA family. In terms of assembly, tetramer of two alpha and two beta chains.

It catalyses the reaction (1S,2R)-1-C-(indol-3-yl)glycerol 3-phosphate + L-serine = D-glyceraldehyde 3-phosphate + L-tryptophan + H2O. It participates in amino-acid biosynthesis; L-tryptophan biosynthesis; L-tryptophan from chorismate: step 5/5. The alpha subunit is responsible for the aldol cleavage of indoleglycerol phosphate to indole and glyceraldehyde 3-phosphate. This Mycobacterium leprae (strain Br4923) protein is Tryptophan synthase alpha chain.